The sequence spans 341 residues: MRILGIETSCDETGIAVYDDEKGLLSHELYSQVKLHADYGGVVPELASRDHVRKIIPLIEKAMEDANTQPSDIDGVAFTQGPGLVGALLVGSSVGRSLAYAWNVPAVGVHHMEGHLLAPMLEDDAPAFPFIALLVSGGHSMLVKVEGIGQYEVLGESIDDAAGEAFDKTAKLLGLDYPGGPLLAKLAEKGEAGHYKFPRPMTDRPGLDFSFSGLKTFAANTIRDADLTGDNAEQIKANIAYAFQEAVVDTLIIKCKRALKQTGMKRLVIAGGVSANTMLRSEMKALMQALKGEVFYPSLAYCTDNGAMIAYAGMQRLKAGETLALSSQAKPRWPLDTLSAI.

Histidine 111 and histidine 115 together coordinate Fe cation. Residues 134-138 (LVSGG), aspartate 167, glycine 180, and asparagine 276 contribute to the substrate site. Aspartate 304 is a Fe cation binding site.

This sequence belongs to the KAE1 / TsaD family. It depends on Fe(2+) as a cofactor.

The protein resides in the cytoplasm. It catalyses the reaction L-threonylcarbamoyladenylate + adenosine(37) in tRNA = N(6)-L-threonylcarbamoyladenosine(37) in tRNA + AMP + H(+). Functionally, required for the formation of a threonylcarbamoyl group on adenosine at position 37 (t(6)A37) in tRNAs that read codons beginning with adenine. Is involved in the transfer of the threonylcarbamoyl moiety of threonylcarbamoyl-AMP (TC-AMP) to the N6 group of A37, together with TsaE and TsaB. TsaD likely plays a direct catalytic role in this reaction. This is tRNA N6-adenosine threonylcarbamoyltransferase from Alteromonas mediterranea (strain DSM 17117 / CIP 110805 / LMG 28347 / Deep ecotype).